A 108-amino-acid polypeptide reads, in one-letter code: Type III secretion system chaperone SseA (108 aa).

The stretch at 69–97 (NQEAEKDLKKIVSLFKQLEVRLKQLNAQA) forms a coiled coil.

In terms of assembly, binds to SseB and SseD.

The protein localises to the cytoplasm. Functionally, functions as a type III secretion system (T3SS) chaperone, which is required for SseB and SseD accumulation and secretion. May have a direct role in secretion of SseB and SseD, or may facilitate their correct folding, for efficient secretion and function. Required for survival and replication within epithelial cells and macrophages. The chain is Type III secretion system chaperone SseA (sseA) from Salmonella typhimurium (strain LT2 / SGSC1412 / ATCC 700720).